Consider the following 1038-residue polypeptide: Probable LRR receptor-like serine/threonine-protein kinase At1g53430 (1038 aa).

An N-terminal signal peptide occupies residues 1–28 (MGFIFSTEKVVYVLLLIFVCLENFGSNA). The Extracellular segment spans residues 29–609 (QLLPEDEVQT…VDTGKPLSNG (581 aa)). 5 N-linked (GlcNAc...) asparagine glycosylation sites follow: Asn-48, Asn-77, Asn-85, Asn-112, and Asn-127. LRR repeat units follow at residues 113 to 137 (LTRL…LSQI), 139 to 160 (LEIL…LGDI), 161 to 184 (TTLT…LGNL), 185 to 208 (RSLK…LSNL), 210 to 234 (NLTE…NWTL), and 236 to 256 (ERLD…ISNL). Asn-196, Asn-210, Asn-231, Asn-255, and Asn-258 each carry an N-linked (GlcNAc...) asparagine glycan. LRR repeat units lie at residues 259-281 (LTEL…LRNL), 282-305 (MKMK…IGSM), 306-328 (SELK…TFRN), 330-351 (DAFN…QFII), and 352-374 (NSKE…SCNQ). N-linked (GlcNAc...) asparagine glycans are attached at residues Asn-339, Asn-363, Asn-471, and Asn-561. A helical membrane pass occupies residues 610-630 (AVAGIVIAACAVFGLLVLVIL). Residues 631 to 1038 (RLTGYLGGKE…LDDLTDVKIE (408 aa)) lie on the Cytoplasmic side of the membrane. The residue at position 658 (Thr-658) is a Phosphothreonine. One can recognise a Protein kinase domain in the interval 669–950 (FDPENKIGEG…EGKIKVQPPL (282 aa)). Residues 675–683 (IGEGGFGPV) and Lys-697 contribute to the ATP site. Residue Tyr-742 is modified to Phosphotyrosine. Asp-795 (proton acceptor) is an active-site residue. Ser-828 carries the post-translational modification Phosphoserine. Phosphothreonine is present on residues Thr-829 and Thr-834. The residue at position 842 (Tyr-842) is a Phosphotyrosine. Residues 984 to 1038 (RNREQDISSSSMDGPWVDSSFSEPGKDVSLQQQEEGRSSSSSRKLLDDLTDVKIE) are disordered. The segment covering 1027-1038 (KLLDDLTDVKIE) has biased composition (basic and acidic residues).

It belongs to the protein kinase superfamily. Ser/Thr protein kinase family.

Its subcellular location is the membrane. It carries out the reaction L-seryl-[protein] + ATP = O-phospho-L-seryl-[protein] + ADP + H(+). The enzyme catalyses L-threonyl-[protein] + ATP = O-phospho-L-threonyl-[protein] + ADP + H(+). This Arabidopsis thaliana (Mouse-ear cress) protein is Probable LRR receptor-like serine/threonine-protein kinase At1g53430.